Reading from the N-terminus, the 147-residue chain is Large ribosomal subunit protein uL13 (147 aa).

Belongs to the universal ribosomal protein uL13 family. As to quaternary structure, part of the 50S ribosomal subunit.

In terms of biological role, this protein is one of the early assembly proteins of the 50S ribosomal subunit, although it is not seen to bind rRNA by itself. It is important during the early stages of 50S assembly. The chain is Large ribosomal subunit protein uL13 from Lactobacillus acidophilus (strain ATCC 700396 / NCK56 / N2 / NCFM).